The primary structure comprises 244 residues: Ribosomal RNA small subunit methyltransferase G (244 aa).

Residues Gly-79, Phe-84, Ala-130 to Glu-131, and Arg-150 each bind S-adenosyl-L-methionine. The disordered stretch occupies residues Lys-221–Met-244.

Belongs to the methyltransferase superfamily. RNA methyltransferase RsmG family.

It localises to the cytoplasm. In terms of biological role, specifically methylates the N7 position of a guanine in 16S rRNA. The polypeptide is Ribosomal RNA small subunit methyltransferase G (Lactiplantibacillus plantarum (strain ATCC BAA-793 / NCIMB 8826 / WCFS1) (Lactobacillus plantarum)).